We begin with the raw amino-acid sequence, 596 residues long: Transketolase-like protein 1 (596 aa).

H46 serves as a coordination point for substrate. Residues S49 and 94 to 96 (GWL) contribute to the thiamine diphosphate site. A Mg(2+)-binding site is contributed by D126. Thiamine diphosphate-binding residues include G127 and N156. Mg(2+) is bound by residues N156 and L158. Thiamine diphosphate contacts are provided by K218 and H232. Residues H232, R292, and S319 each contribute to the substrate site. Thiamine diphosphate contacts are provided by E340 and F366. Catalysis depends on E340, which acts as the Proton donor. Residues H390 and D398 each coordinate substrate. Q402 is a binding site for thiamine diphosphate. R448 contributes to the substrate binding site.

This sequence belongs to the transketolase family. As to quaternary structure, homodimer. It depends on Mg(2+) as a cofactor. Ca(2+) is required as a cofactor. Requires Mn(2+) as cofactor. Co(2+) serves as cofactor. The cofactor is thiamine diphosphate.

The protein resides in the cytoplasm. The catalysed reaction is D-sedoheptulose 7-phosphate + D-glyceraldehyde 3-phosphate = aldehydo-D-ribose 5-phosphate + D-xylulose 5-phosphate. In terms of biological role, catalyzes the transfer of a two-carbon ketol group from a ketose donor to an aldose acceptor, via a covalent intermediate with the cofactor thiamine pyrophosphate. This chain is Transketolase-like protein 1 (TKTL1), found in Macaca fascicularis (Crab-eating macaque).